A 145-amino-acid polypeptide reads, in one-letter code: MLLPKRVKYRRVHRGKMRGNAKRGTTVHFGEFGLQALEASWITNRQIESARIAMTRYMKRGGKVWIKIFPHKPYTKKPLEVRMGSGKGAPEGWVAVVKPGKVMFEIAGVSEEVAREALRLASHKLPVKCKFVKREENGGDTNESN.

The protein belongs to the universal ribosomal protein uL16 family. Part of the 50S ribosomal subunit.

Its function is as follows. Binds 23S rRNA and is also seen to make contacts with the A and possibly P site tRNAs. This Exiguobacterium sp. (strain ATCC BAA-1283 / AT1b) protein is Large ribosomal subunit protein uL16.